The chain runs to 597 residues: MFS-type transporter FPY5 (597 aa).

The interval 1–55 (MSETTGLPLKHLQGSPPGTPVNTNNESNEASPDDGCRLPDTVTEAEASSDNHGSV) is disordered. 2 stretches are compositionally biased toward polar residues: residues 20-30 (PVNTNNESNEA) and 46-55 (EASSDNHGSV). Asn-25 is a glycosylation site (N-linked (GlcNAc...) asparagine). The N-linked (GlcNAc...) asparagine glycan is linked to Asn-72. The next 9 membrane-spanning stretches (helical) occupy residues 94–114 (LSLL…VSIV), 120–140 (FNMA…FLII), 147–167 (IFGC…FSMA), 183–203 (FQGM…PLMV), 214–234 (IMSS…GAIT), 241–261 (WVFY…AFSV), 286–306 (VDFV…FALE), 316–336 (SGAI…FIAW), and 360–380 (FVMG…AALI). A glycan (N-linked (GlcNAc...) asparagine) is linked at Asn-390. 5 helical membrane-spanning segments follow: residues 402-422 (LPLL…VSKL), 424-444 (VPPL…VGLY), 463-483 (IMGL…PLVV), 498-518 (IRVL…INHI), and 562-582 (EQMR…VLLV).

This sequence belongs to the major facilitator superfamily. TCR/Tet family.

Its subcellular location is the membrane. It functions in the pathway secondary metabolite biosynthesis. In terms of biological role, MFS-type transporter; part of the gene cluster that mediates the biosynthesis of the gamma-pyrones fusapyrone (FPY) and deoxyfusapyrone (dFPY). The polypeptide is MFS-type transporter FPY5 (Fusarium mangiferae (Mango malformation disease fungus)).